The following is a 201-amino-acid chain: Translation initiation factor IF-3 (201 aa).

The protein belongs to the IF-3 family. In terms of assembly, monomer.

The protein localises to the cytoplasm. In terms of biological role, IF-3 binds to the 30S ribosomal subunit and shifts the equilibrium between 70S ribosomes and their 50S and 30S subunits in favor of the free subunits, thus enhancing the availability of 30S subunits on which protein synthesis initiation begins. The protein is Translation initiation factor IF-3 of Mycoplasma pneumoniae (strain ATCC 29342 / M129 / Subtype 1) (Mycoplasmoides pneumoniae).